The chain runs to 361 residues: Transcription factor MafA (361 aa).

Ser-14 bears the Phosphoserine mark. Lys-32 is covalently cross-linked (Glycyl lysine isopeptide (Lys-Gly) (interchain with G-Cter in SUMO2)). 2 disordered regions span residues 40 to 105 (RFCH…VGGA) and 175 to 228 (GGAD…AGHH). Over residues 46–76 (PPGSLSSTPLSTPCSSVPSSPSFCAPSPGTG) the composition is skewed to low complexity. Ser-49 bears the Phosphoserine mark. Phosphothreonine occurs at positions 53 and 57. Residues Ser-61 and Ser-65 each carry the phosphoserine modification. Basic residues predominate over residues 183–211 (GHHHGAHHTAHHHHSAHHHHHHHHHHGGS). Residues 212 to 226 (GHHGGGAGHGGGGAG) are compositionally biased toward gly residues. Residues 262 to 287 (RLKQKRRTLKNRGYAQSCRFKRVQQR) are basic motif. Positions 262 to 325 (RLKQKRRTLK…DLYKEKYEKL (64 aa)) constitute a bZIP domain. The tract at residues 290 to 311 (LESEKCQLQSQVEQLKLEVGRL) is leucine-zipper. Residues 324-361 (KLAGRGGPGGAGGAGFPREPSPAQAGPGAAKGAPDFFL) form a disordered region. A compositionally biased stretch (gly residues) spans 327 to 338 (GRGGPGGAGGAG). A compositionally biased stretch (low complexity) spans 345–361 (PAQAGPGAAKGAPDFFL).

It belongs to the bZIP family. Forms homodimers. Monomers and dimers are able to bind DNA, but the off-rate is faster for monomers. Interacts with NEUROD1 and PDX1. May interact with MAFB, FOS, JUN and PCAF. In terms of processing, ubiquitinated, leading to its degradation by the proteasome. Phosphorylated at tyrosines.

It localises to the nucleus. Functionally, transcription factor that activates insulin gene expression. Acts synergistically with NEUROD1/BETA2 and PDX1. Binds the insulin enhancer C1/RIPE3b element. Binds to consensus TRE-type MARE 5'-TGCTGACTCAGCA-3' DNA sequence. The chain is Transcription factor MafA (Mafa) from Rattus norvegicus (Rat).